A 543-amino-acid polypeptide reads, in one-letter code: Organic anion transporter 3 (543 aa).

Over 1-21 (MTFAELVDRVGSKGPFQLLHT) the chain is Cytoplasmic. The helical transmembrane segment at 22–42 (VLLGLPILGMANHNLLQIFTA) threads the bilayer. The Extracellular segment spans residues 43 to 124 (PTPAHHCRPP…LVCSSSKLKE (82 aa)). Asn-81 carries N-linked (GlcNAc...) asparagine glycosylation. A helical membrane pass occupies residues 125–145 (MAQSVFMAGILVGGLVLGALS). Residues 146–151 (DRFGRK) lie on the Cytoplasmic side of the membrane. A helical membrane pass occupies residues 152 to 172 (PILIFSYLLLGASGSGAAFSP). The Extracellular portion of the chain corresponds to 173-181 (TFSIYAVFR). The helical transmembrane segment at 182-202 (FLCGFSISGISLSTAILNVEW) threads the bilayer. Over 203–212 (VSTRFRAIKS) the chain is Cytoplasmic. The helical transmembrane segment at 213 to 233 (IAVGFFYTFGQFILPGLAYAI) threads the bilayer. Residues 234 to 237 (PQWR) lie on the Extracellular side of the membrane. The helical transmembrane segment at 238–258 (WLQLTVSVPFLTFFLLSWWLP) threads the bilayer. Residues 259 to 328 (ESIRWMVLSG…FRTPVLRRVT (70 aa)) lie on the Cytoplasmic side of the membrane. Residues 329–349 (LCLSLAWFATGFAYYSLAMGV) form a helical membrane-spanning segment. Topologically, residues 350–355 (EEFGVN) are extracellular. The helical transmembrane segment at 356 to 376 (LYVLQLIFGGVDVPAKFITML) threads the bilayer. The Cytoplasmic portion of the chain corresponds to 377–388 (SISYLGRHITEG). Residues 389-409 (IVLLLAGGCILALIFVPLDLM) form a helical membrane-spanning segment. The Extracellular portion of the chain corresponds to 410–412 (TLR). A helical membrane pass occupies residues 413 to 433 (TVLAVFGKGCLSGSFSCLFLY). The Cytoplasmic segment spans residues 434–472 (TSELYPTVIRQTGMGASNLWARVGSMTAPLVKITGELQP). Residues 473–493 (FIPNIIFGTIALLGGSAALFL) form a helical membrane-spanning segment. Residues 494-543 (PETLNRPLPETIEDIETWSLRAKEPKPEPEAEKSSQRIPLQPCEPGPGPS) are Extracellular-facing. Residues 513-543 (LRAKEPKPEPEAEKSSQRIPLQPCEPGPGPS) form a disordered region. The segment covering 514–528 (RAKEPKPEPEAEKSS) has biased composition (basic and acidic residues).

This sequence belongs to the major facilitator (TC 2.A.1) superfamily. Organic cation transporter (TC 2.A.1.19) family. In terms of tissue distribution, expressed in kidney.

The protein resides in the basolateral cell membrane. It carries out the reaction estrone 3-sulfate(out) + glutarate(in) = estrone 3-sulfate(in) + glutarate(out). The catalysed reaction is estrone 3-sulfate(in) + 2-oxoglutarate(out) = estrone 3-sulfate(out) + 2-oxoglutarate(in). The enzyme catalyses glutarate(in) + 2-oxoglutarate(out) = glutarate(out) + 2-oxoglutarate(in). It catalyses the reaction urate(in) + 2-oxoglutarate(out) = urate(out) + 2-oxoglutarate(in). It carries out the reaction taurocholate(out) + glutarate(in) = taurocholate(in) + glutarate(out). The catalysed reaction is dehydroepiandrosterone 3-sulfate(out) + glutarate(in) = dehydroepiandrosterone 3-sulfate(in) + glutarate(out). The enzyme catalyses prostaglandin F2alpha(out) + glutarate(in) = prostaglandin F2alpha(in) + glutarate(out). It catalyses the reaction prostaglandin F2alpha(out) + 2-oxoglutarate(in) = prostaglandin F2alpha(in) + 2-oxoglutarate(out). It carries out the reaction (R)-carnitine(out) + 2-oxoglutarate(in) = (R)-carnitine(in) + 2-oxoglutarate(out). The catalysed reaction is glutarate(in) + (R)-carnitine(out) = glutarate(out) + (R)-carnitine(in). The enzyme catalyses prostaglandin E2(out) + 2-oxoglutarate(in) = prostaglandin E2(in) + 2-oxoglutarate(out). It catalyses the reaction prostaglandin E2(out) + glutarate(in) = prostaglandin E2(in) + glutarate(out). It carries out the reaction urate(in) + glutarate(out) = urate(out) + glutarate(in). The catalysed reaction is taurocholate(out) + 2-oxoglutarate(in) = taurocholate(in) + 2-oxoglutarate(out). The enzyme catalyses dehydroepiandrosterone 3-sulfate(out) + 2-oxoglutarate(in) = dehydroepiandrosterone 3-sulfate(in) + 2-oxoglutarate(out). It catalyses the reaction kynurenate(out) + a dicarboxylate(in) = kynurenate(in) + a dicarboxylate(out). It carries out the reaction (indol-3-yl)acetate(out) + a dicarboxylate(in) = (indol-3-yl)acetate(in) + a dicarboxylate(out). The catalysed reaction is indoxyl sulfate(out) + a dicarboxylate(in) = indoxyl sulfate(in) + a dicarboxylate(out). The enzyme catalyses N-benzoylglycine(out) + a dicarboxylate(in) = N-benzoylglycine(in) + a dicarboxylate(out). It catalyses the reaction 3-carboxy-4-methyl-5-propyl-2-furanpropanoate(out) + a dicarboxylate(in) = 3-carboxy-4-methyl-5-propyl-2-furanpropanoate(in) + a dicarboxylate(out). It carries out the reaction (6R)-L-erythro-5,6,7,8-tetrahydrobiopterin(out) + a dicarboxylate(in) = (6R)-L-erythro-5,6,7,8-tetrahydrobiopterin(in) + a dicarboxylate(out). The catalysed reaction is L-erythro-7,8-dihydrobiopterin(out) + a dicarboxylate(in) = L-erythro-7,8-dihydrobiopterin(in) + a dicarboxylate(out). The enzyme catalyses L-sepiapterin(out) + a dicarboxylate(in) = L-sepiapterin(in) + a dicarboxylate(out). Functionally, functions as an organic anion/dicarboxylate exchanger that couples organic anion uptake indirectly to the sodium gradient. Transports organic anions such as estrone 3-sulfate (E1S) and urate in exchange for dicarboxylates such as glutarate or ketoglutarate (2-oxoglutarate). Plays an important role in the excretion of endogenous and exogenous organic anions, especially from the kidney and the brain. E1S transport is pH- and chloride-dependent and may also involve E1S/cGMP exchange. Responsible for the transport of prostaglandin E2 (PGE2) and prostaglandin F2(alpha) (PGF2(alpha)) in the basolateral side of the renal tubule. Involved in the transport of neuroactive tryptophan metabolites kynurenate and xanthurenate. Functions as a biopterin transporters involved in the uptake and the secretion of coenzymes tetrahydrobiopterin (BH4), dihydrobiopterin (BH2) and sepiapterin to urine, thereby determining baseline levels of blood biopterins. May be involved in the basolateral transport of steviol, a metabolite of the popular sugar substitute stevioside. May participate in the detoxification/ renal excretion of drugs and xenobiotics, such as the histamine H(2)-receptor antagonists fexofenadine and cimetidine, the antibiotic benzylpenicillin (PCG), the anionic herbicide 2,4-dichloro-phenoxyacetate (2,4-D), the diagnostic agent p-aminohippurate (PAH), the antiviral acyclovir (ACV), and the mycotoxin ochratoxin (OTA), by transporting these exogenous organic anions across the cell membrane in exchange for dicarboxylates such as 2-oxoglutarate. Contributes to the renal uptake of potent uremic toxins (indoxyl sulfate (IS), indole acetate (IA), hippurate/N-benzoylglycine (HA) and 3-carboxy-4-methyl-5-propyl-2-furanpropionate (CMPF)), pravastatin, PCG, E1S and dehydroepiandrosterone sulfate (DHEAS), and is partly involved in the renal uptake of temocaprilat (an angiotensin-converting enzyme (ACE) inhibitor). May contribute to the release of cortisol in the adrenals. Involved in one of the detoxification systems on the choroid plexus (CP), removes substrates such as E1S or taurocholate (TC), PCG, 2,4-D and PAH, from the cerebrospinal fluid (CSF) to the blood for eventual excretion in urine and bile. Also contributes to the uptake of several other organic compounds such as the prostanoids prostaglandin E(2) and prostaglandin F(2-alpha), L-carnitine, and the therapeutic drugs allopurinol, 6-mercaptopurine (6-MP) and 5-fluorouracil (5-FU). Mediates the transport of PAH, PCG, and the statins pravastatin and pitavastatin, from the cerebrum into the blood circulation across the blood-brain barrier (BBB). In summary, plays a role in the efflux of drugs and xenobiotics, helping reduce their undesired toxicological effects on the body. The sequence is that of Organic anion transporter 3 (SLC22A8) from Sus scrofa (Pig).